Reading from the N-terminus, the 332-residue chain is Glucokinase (332 aa).

15–20 (ADIGGT) provides a ligand contact to ATP.

Belongs to the bacterial glucokinase family.

Its subcellular location is the cytoplasm. It carries out the reaction D-glucose + ATP = D-glucose 6-phosphate + ADP + H(+). In Campylobacter jejuni subsp. doylei (strain ATCC BAA-1458 / RM4099 / 269.97), this protein is Glucokinase.